An 821-amino-acid polypeptide reads, in one-letter code: Fibroblast growth factor receptor 2 (821 aa).

The first 21 residues, 1-21 (MVSWGRFICLVVVTMATLSLA), serve as a signal peptide directing secretion. The Extracellular portion of the chain corresponds to 22–377 (RPSFSLVEDT…EITASPDYLE (356 aa)). The 101-residue stretch at 25–125 (FSLVEDTTLE…ETWYFMVNVT (101 aa)) folds into the Ig-like C2-type 1 domain. The cysteines at positions 62 and 107 are disulfide-linked. Asn83 and Asn123 each carry an N-linked (GlcNAc...) asparagine glycan. Over residues 131-144 (GDDEDDTDGAEDFV) the composition is skewed to acidic residues. A disordered region spans residues 131 to 151 (GDDEDDTDGAEDFVSENSNNK). 2 consecutive Ig-like C2-type domains span residues 154-247 (PYWT…YHLD) and 256-358 (PILQ…AWLT). The heparin-binding stretch occupies residues 161–178 (KMEKRLHAVPAANTVKFR). Cys179 and Cys231 are oxidised to a cystine. N-linked (GlcNAc...) asparagine glycosylation is found at Asn228, Asn241, Asn265, Asn297, Asn318, and Asn331. A disulfide bridge links Cys278 with Cys342. The helical transmembrane segment at 378–398 (IAIYCIGVFLIACMVVTVILC) threads the bilayer. The Cytoplasmic portion of the chain corresponds to 399-821 (RMKNTTKKPD…YPHINGSVKT (423 aa)). Tyr466 is modified (phosphotyrosine; by autocatalysis). Residues 481-770 (LTLGKPLGEG…LTLTTNEEYL (290 aa)) enclose the Protein kinase domain. Residues 487 to 495 (LGEGCFGQV), Lys517, 565 to 567 (EYA), and Asn571 each bind ATP. Phosphotyrosine; by autocatalysis is present on residues Tyr586 and Tyr588. Catalysis depends on Asp626, which acts as the Proton acceptor. Phosphotyrosine; by autocatalysis is present on residues Tyr656, Tyr657, and Tyr769. Phosphoserine is present on Ser780.

It belongs to the protein kinase superfamily. Tyr protein kinase family. Fibroblast growth factor receptor subfamily. Monomer. Homodimer after ligand binding. Interacts predominantly with FGF1 and FGF2, but can also interact with FGF3, FGF4, FGF6, FGF7, FGF8, FGF9, FGF10, FGF17, FGF18 and FGF22 (in vitro). Ligand specificity is determined by tissue-specific expression of isoforms, and differences in the third Ig-like domain are crucial for ligand specificity. Isoform 1 has high affinity for FGF1 and FGF2, but low affinity for FGF7. Isoform 3 has high affinity for FGF1 and FGF7, and has much higher affinity for FGF7 than isoform 1 (in vitro). Affinity for fibroblast growth factors (FGFs) is increased by heparan sulfate glycosaminoglycans that function as coreceptors. Likewise, KLB increases the affinity for FGF19 and FGF21. Interacts with PLCG1, GRB2 and PAK4. Interacts with FLRT2. In terms of processing, autophosphorylated. Binding of FGF family members together with heparan sulfate proteoglycan or heparin promotes receptor dimerization and autophosphorylation on several tyrosine residues. Autophosphorylation occurs in trans between the two FGFR molecules present in the dimer. Phosphorylation at Tyr-769 is essential for interaction with PLCG1. Post-translationally, N-glycosylated in the endoplasmic reticulum. The N-glycan chains undergo further maturation to an Endo H-resistant form in the Golgi apparatus. Ubiquitinated. FGFR2 is rapidly ubiquitinated after autophosphorylation, leading to internalization and degradation. Subject to degradation both in lysosomes and by the proteasome.

Its subcellular location is the cell membrane. It localises to the golgi apparatus. It is found in the cytoplasmic vesicle. The protein resides in the secreted. It carries out the reaction L-tyrosyl-[protein] + ATP = O-phospho-L-tyrosyl-[protein] + ADP + H(+). Its activity is regulated as follows. Present in an inactive conformation in the absence of bound ligand. Ligand binding leads to dimerization and activation by autophosphorylation on tyrosine residues. Inhibited by ARQ 523 and ARQ 069; these compounds maintain the kinase in an inactive conformation and inhibit autophosphorylation. Its function is as follows. Tyrosine-protein kinase that acts as a cell-surface receptor for fibroblast growth factors and plays an essential role in the regulation of cell proliferation, differentiation, migration and apoptosis, and in the regulation of embryonic development. Required for normal embryonic patterning, trophoblast function, limb bud development, lung morphogenesis, osteogenesis and skin development. Plays an essential role in the regulation of osteoblast differentiation, proliferation and apoptosis, and is required for normal skeleton development. Promotes cell proliferation in keratinocytes and immature osteoblasts, but promotes apoptosis in differentiated osteoblasts. Phosphorylates PLCG1, FRS2 and PAK4. Ligand binding leads to the activation of several signaling cascades. Activation of PLCG1 leads to the production of the cellular signaling molecules diacylglycerol and inositol 1,4,5-trisphosphate. Phosphorylation of FRS2 triggers recruitment of GRB2, GAB1, PIK3R1 and SOS1, and mediates activation of RAS, MAPK1/ERK2, MAPK3/ERK1 and the MAP kinase signaling pathway, as well as of the AKT1 signaling pathway. FGFR2 signaling is down-regulated by ubiquitination, internalization and degradation. Mutations that lead to constitutive kinase activation or impair normal FGFR2 maturation, internalization and degradation lead to aberrant signaling. Over-expressed FGFR2 promotes activation of STAT1. The chain is Fibroblast growth factor receptor 2 (FGFR2) from Homo sapiens (Human).